We begin with the raw amino-acid sequence, 309 residues long: Glutaminase (309 aa).

7 residues coordinate substrate: Ser-64, Asn-114, Glu-160, Asn-167, Tyr-191, Tyr-243, and Val-261.

The protein belongs to the glutaminase family. As to quaternary structure, homotetramer.

It carries out the reaction L-glutamine + H2O = L-glutamate + NH4(+). The sequence is that of Glutaminase from Azorhizobium caulinodans (strain ATCC 43989 / DSM 5975 / JCM 20966 / LMG 6465 / NBRC 14845 / NCIMB 13405 / ORS 571).